The following is a 1001-amino-acid chain: Serine/threonine-protein kinase TAO1 (1001 aa).

S9 bears the Phosphoserine mark. The Protein kinase domain maps to 28–281 (FTDLREIGHG…SEELLKHIFV (254 aa)). ATP is bound by residues 34-42 (IGHGSFGAV) and K57. The active-site Proton acceptor is D151. The disordered stretch occupies residues 324 to 433 (PAVEAQEEEE…QVSRHKSHYR (110 aa)). Residues 350 to 373 (SNQSIPSMSISASSQSSSVNSLPD) are compositionally biased toward low complexity. Composition is skewed to basic and acidic residues over residues 375–388 (SDDK…EGDH) and 399–416 (LKPE…RTRA). Phosphoserine occurs at positions 421 and 445. Residues 458-651 (SELREQMSGY…QTQKDLEHAM (194 aa)) are a coiled coil. A disordered region spans residues 567–587 (KEELNENQSTPKKEKQEWLSK). Positions 577 to 587 (PKKEKQEWLSK) are enriched in basic and acidic residues. The residue at position 669 (T669) is a Phosphothreonine. A coiled-coil region spans residues 754–877 (KAVLKRLKEE…LERQAREIEA (124 aa)). Residues 911–1001 (SHNPTGGPGP…ISNGSHMSYT (91 aa)) are disordered. S965 is modified (phosphoserine). Over residues 975 to 1001 (GGRTEQGMSRSTSVTSQISNGSHMSYT) the composition is skewed to polar residues.

This sequence belongs to the protein kinase superfamily. STE Ser/Thr protein kinase family. STE20 subfamily. Self-associates. Interacts with MAP2K3. Interacts with SPRED1. Interacts with TESK1; the interaction inhibits TAOK1 kinase activity. Interacts with MAP3K7. Post-translationally, proteolytically processed by caspase-3 (CASP3). In terms of processing, autophosphorylated. Phosphorylated by ATM in response to DNA damage. Phosphorylated by LRRK2. In terms of tissue distribution, highly expressed in the testis, and to a lower extent also expressed in brain, placenta, colon and skeletal muscle.

The protein resides in the cytoplasm. It carries out the reaction L-seryl-[protein] + ATP = O-phospho-L-seryl-[protein] + ADP + H(+). The catalysed reaction is L-threonyl-[protein] + ATP = O-phospho-L-threonyl-[protein] + ADP + H(+). Its activity is regulated as follows. Serine/threonine-protein kinase activity is inhibited by SPRED1. In terms of biological role, serine/threonine-protein kinase involved in various processes such as p38/MAPK14 stress-activated MAPK cascade, DNA damage response and regulation of cytoskeleton stability. Phosphorylates MAP2K3, MAP2K6 and MARK2. Acts as an activator of the p38/MAPK14 stress-activated MAPK cascade by mediating phosphorylation and subsequent activation of the upstream MAP2K3 and MAP2K6 kinases. Involved in G-protein coupled receptor signaling to p38/MAPK14. In response to DNA damage, involved in the G2/M transition DNA damage checkpoint by activating the p38/MAPK14 stress-activated MAPK cascade, probably by mediating phosphorylation of MAP2K3 and MAP2K6. Acts as a regulator of cytoskeleton stability by phosphorylating 'Thr-208' of MARK2, leading to activate MARK2 kinase activity and subsequent phosphorylation and detachment of MAPT/TAU from microtubules. Also acts as a regulator of apoptosis: regulates apoptotic morphological changes, including cell contraction, membrane blebbing and apoptotic bodies formation via activation of the MAPK8/JNK cascade. Plays an essential role in the regulation of neuronal development in the central nervous system. Also plays a role in the regulation of neuronal migration to the cortical plate. This Homo sapiens (Human) protein is Serine/threonine-protein kinase TAO1 (TAOK1).